The following is a 203-amino-acid chain: Peptide deformylase (203 aa).

Fe cation-binding residues include C130 and H173. E174 is a catalytic residue. Position 177 (H177) interacts with Fe cation.

It belongs to the polypeptide deformylase family. Fe(2+) is required as a cofactor.

It carries out the reaction N-terminal N-formyl-L-methionyl-[peptide] + H2O = N-terminal L-methionyl-[peptide] + formate. In terms of biological role, removes the formyl group from the N-terminal Met of newly synthesized proteins. Requires at least a dipeptide for an efficient rate of reaction. N-terminal L-methionine is a prerequisite for activity but the enzyme has broad specificity at other positions. In Streptococcus pneumoniae serotype 2 (strain D39 / NCTC 7466), this protein is Peptide deformylase.